Here is a 147-residue protein sequence, read N- to C-terminus: Anti-sigma F factor (147 aa).

The protein belongs to the anti-sigma-factor family.

The catalysed reaction is L-seryl-[protein] + ATP = O-phospho-L-seryl-[protein] + ADP + H(+). The enzyme catalyses L-threonyl-[protein] + ATP = O-phospho-L-threonyl-[protein] + ADP + H(+). In terms of biological role, binds to sigma F and blocks its ability to form an RNA polymerase holoenzyme (E-sigma F). Phosphorylates SpoIIAA on a serine residue. This phosphorylation may enable SpoIIAA to act as an anti-anti-sigma factor that counteracts SpoIIAB and thus releases sigma F from inhibition. This Heyndrickxia coagulans (Weizmannia coagulans) protein is Anti-sigma F factor.